The primary structure comprises 892 residues: Alanine--tRNA ligase (892 aa).

The Zn(2+) site is built by histidine 565, histidine 569, cysteine 675, and histidine 679. A disordered region spans residues 852–871 (MGGKGGGGRPDMAQAGGPEA).

The protein belongs to the class-II aminoacyl-tRNA synthetase family. Zn(2+) serves as cofactor.

The protein localises to the cytoplasm. The catalysed reaction is tRNA(Ala) + L-alanine + ATP = L-alanyl-tRNA(Ala) + AMP + diphosphate. Its function is as follows. Catalyzes the attachment of alanine to tRNA(Ala) in a two-step reaction: alanine is first activated by ATP to form Ala-AMP and then transferred to the acceptor end of tRNA(Ala). Also edits incorrectly charged Ser-tRNA(Ala) and Gly-tRNA(Ala) via its editing domain. The protein is Alanine--tRNA ligase of Parvibaculum lavamentivorans (strain DS-1 / DSM 13023 / NCIMB 13966).